The sequence spans 447 residues: Elongation factor 1-alpha (447 aa).

The tr-type G domain maps to 5–230; the sequence is KTHINIVVIG…DQINEPKRPS (226 aa). The segment at 14–21 is G1; that stretch reads GHVDSGKS. A GTP-binding site is contributed by 14 to 21; the sequence is GHVDSGKS. The residue at position 55 (lysine 55) is an N6,N6-dimethyllysine. Positions 70–74 are G2; the sequence is GITID. At lysine 79 the chain carries N6,N6,N6-trimethyllysine. The segment at 91 to 94 is G3; it reads DAPG. Residues 91–95 and 153–156 each bind GTP; these read DAPGH and NKMD. Residues 153 to 156 form a G4 region; it reads NKMD. An N6,N6,N6-trimethyllysine modification is found at lysine 187. Residues 194 to 196 form a G5 region; it reads SGF. Lysine 261 carries the post-translational modification N6-methyllysine. The residue at position 289 (glutamate 289) is a 5-glutamyl glycerylphosphorylethanolamine. Lysine 306 is modified (N6,N6,N6-trimethyllysine). Glutamate 362 is subject to 5-glutamyl glycerylphosphorylethanolamine. Lysine 396 is modified (N6,N6,N6-trimethyllysine).

It belongs to the TRAFAC class translation factor GTPase superfamily. Classic translation factor GTPase family. EF-Tu/EF-1A subfamily.

The protein resides in the cytoplasm. Functionally, this protein promotes the GTP-dependent binding of aminoacyl-tRNA to the A-site of ribosomes during protein biosynthesis. The protein is Elongation factor 1-alpha (REFA1) of Oryza sativa subsp. japonica (Rice).